Here is a 202-residue protein sequence, read N- to C-terminus: Large ribosomal subunit protein uL18 (202 aa).

This sequence belongs to the universal ribosomal protein uL18 family. In terms of assembly, part of the 50S ribosomal subunit. Contacts the 5S and 23S rRNAs.

Its function is as follows. This is one of the proteins that bind and probably mediate the attachment of the 5S RNA into the large ribosomal subunit, where it forms part of the central protuberance. This is Large ribosomal subunit protein uL18 from Staphylothermus marinus (strain ATCC 43588 / DSM 3639 / JCM 9404 / F1).